Reading from the N-terminus, the 914-residue chain is Protein translocase subunit SecA (914 aa).

Residues Gln87, 105–109 (GEGKT), and Asp500 contribute to the ATP site. Zn(2+) contacts are provided by Cys898, Cys900, Cys909, and His910.

This sequence belongs to the SecA family. Monomer and homodimer. Part of the essential Sec protein translocation apparatus which comprises SecA, SecYEG and auxiliary proteins SecDF-YajC and YidC. Zn(2+) serves as cofactor.

The protein resides in the cell inner membrane. The protein localises to the cytoplasm. It catalyses the reaction ATP + H2O + cellular proteinSide 1 = ADP + phosphate + cellular proteinSide 2.. Functionally, part of the Sec protein translocase complex. Interacts with the SecYEG preprotein conducting channel. Has a central role in coupling the hydrolysis of ATP to the transfer of proteins into and across the cell membrane, serving as an ATP-driven molecular motor driving the stepwise translocation of polypeptide chains across the membrane. This is Protein translocase subunit SecA from Acidithiobacillus ferrooxidans (strain ATCC 23270 / DSM 14882 / CIP 104768 / NCIMB 8455) (Ferrobacillus ferrooxidans (strain ATCC 23270)).